The primary structure comprises 234 residues: Large ribosomal subunit protein uL1 (234 aa).

Belongs to the universal ribosomal protein uL1 family. In terms of assembly, part of the 50S ribosomal subunit.

Binds directly to 23S rRNA. The L1 stalk is quite mobile in the ribosome, and is involved in E site tRNA release. Functionally, protein L1 is also a translational repressor protein, it controls the translation of the L11 operon by binding to its mRNA. This is Large ribosomal subunit protein uL1 from Prochlorococcus marinus (strain MIT 9211).